The primary structure comprises 609 residues: Interleukin-1 receptor-associated kinase 3 (609 aa).

The region spanning 41 to 106 (WRGLAERLSN…RAIHLIINYG (66 aa)) is the Death domain. Position 110 is a phosphothreonine (Thr-110). The Protein kinase domain occupies 178–463 (FHKDFLIGEG…SSLESTQPSL (286 aa)). ATP-binding positions include 184–192 (IGEGEIFEV), Lys-205, 308–311 (SSAN), and Asp-324. A Phosphoserine modification is found at Ser-480.

The protein belongs to the protein kinase superfamily. TKL Ser/Thr protein kinase family. Pelle subfamily. In terms of assembly, monomer. Homodimer. May interact with IRAK4 (when phosphorylated). Interacts (when phosphorylated at Thr-110) with PIN1 (via WW domain) in response to IL33-mediated (but not TLR4 ligand LPS) dendritic cell stimulation. In terms of tissue distribution, expressed in inflamed lung macrophages (at protein level). Expressed in dendritic cells (at protein level). Highly expressed in liver and thymus and at lower levels in heart, brain, spleen and kidney.

It localises to the cytoplasm. The protein localises to the nucleus. Its function is as follows. Putative inactive protein kinase which regulates signaling downstream of immune receptors including IL1R and Toll-like receptors. Inhibits dissociation of IRAK1 and IRAK4 from the Toll-like receptor signaling complex by either inhibiting the phosphorylation of IRAK1 and IRAK4 or stabilizing the receptor complex. Upon IL33-induced lung inflammation, positively regulates expression of IL6, CSF3, CXCL2 and CCL5 mRNAs in dendritic cells. The sequence is that of Interleukin-1 receptor-associated kinase 3 from Mus musculus (Mouse).